The sequence spans 1009 residues: Type VII secretion system accessory factor EsaA (1009 aa).

A helical membrane pass occupies residues isoleucine 7–valine 27. Residues threonine 680 to glutamate 697 show a composition bias toward basic and acidic residues. The tract at residues threonine 680–lysine 707 is disordered. A run of 5 helical transmembrane segments spans residues isoleucine 822–phenylalanine 842, valine 869–isoleucine 889, lysine 903–leucine 923, serine 928–leucine 948, and isoleucine 979–phenylalanine 999.

The protein belongs to the EsaA family. As to quaternary structure, homodimer. Interacts with EssB.

It is found in the cell membrane. Component of the type VII secretion system (Ess). Provides together with EssB and other components such as EssC and EssE a secretion plateform accross the cytoplasmic membrane in the host. This Staphylococcus aureus (strain USA300) protein is Type VII secretion system accessory factor EsaA.